The sequence spans 200 residues: Small ribosomal subunit protein uS4c (200 aa).

An S4 RNA-binding domain is found at 90–150; sequence MRLDNIIFRL…NRKESVIIKN (61 aa).

The protein belongs to the universal ribosomal protein uS4 family. As to quaternary structure, part of the 30S ribosomal subunit. Contacts protein S5. The interaction surface between S4 and S5 is involved in control of translational fidelity.

Its subcellular location is the plastid. The protein resides in the chloroplast. One of the primary rRNA binding proteins, it binds directly to 16S rRNA where it nucleates assembly of the body of the 30S subunit. Functionally, with S5 and S12 plays an important role in translational accuracy. This Pellia neesiana (Liverwort) protein is Small ribosomal subunit protein uS4c (rps4).